The sequence spans 132 residues: ATP synthase epsilon chain (132 aa).

The protein belongs to the ATPase epsilon chain family. F-type ATPases have 2 components, CF(1) - the catalytic core - and CF(0) - the membrane proton channel. CF(1) has five subunits: alpha(3), beta(3), gamma(1), delta(1), epsilon(1). CF(0) has three main subunits: a, b and c.

It is found in the cell inner membrane. Produces ATP from ADP in the presence of a proton gradient across the membrane. In Aquifex aeolicus (strain VF5), this protein is ATP synthase epsilon chain (atpC).